The chain runs to 197 residues: ATP synthase subunit delta (197 aa).

It belongs to the ATPase delta chain family. F-type ATPases have 2 components, F(1) - the catalytic core - and F(0) - the membrane proton channel. F(1) has five subunits: alpha(3), beta(3), gamma(1), delta(1), epsilon(1). F(0) has three main subunits: a(1), b(2) and c(10-14). The alpha and beta chains form an alternating ring which encloses part of the gamma chain. F(1) is attached to F(0) by a central stalk formed by the gamma and epsilon chains, while a peripheral stalk is formed by the delta and b chains.

The protein resides in the cell inner membrane. Functionally, f(1)F(0) ATP synthase produces ATP from ADP in the presence of a proton or sodium gradient. F-type ATPases consist of two structural domains, F(1) containing the extramembraneous catalytic core and F(0) containing the membrane proton channel, linked together by a central stalk and a peripheral stalk. During catalysis, ATP synthesis in the catalytic domain of F(1) is coupled via a rotary mechanism of the central stalk subunits to proton translocation. Its function is as follows. This protein is part of the stalk that links CF(0) to CF(1). It either transmits conformational changes from CF(0) to CF(1) or is implicated in proton conduction. The protein is ATP synthase subunit delta of Bartonella henselae (strain ATCC 49882 / DSM 28221 / CCUG 30454 / Houston 1) (Rochalimaea henselae).